Reading from the N-terminus, the 122-residue chain is Large ribosomal subunit protein bL12 (122 aa).

This sequence belongs to the bacterial ribosomal protein bL12 family. In terms of assembly, homodimer. Part of the ribosomal stalk of the 50S ribosomal subunit. Forms a multimeric L10(L12)X complex, where L10 forms an elongated spine to which 2 to 4 L12 dimers bind in a sequential fashion. Binds GTP-bound translation factors.

Functionally, forms part of the ribosomal stalk which helps the ribosome interact with GTP-bound translation factors. Is thus essential for accurate translation. The polypeptide is Large ribosomal subunit protein bL12 (Enterococcus faecalis (strain ATCC 700802 / V583)).